A 368-amino-acid chain; its full sequence is MEPLFPASPLTTWNTSSVVPSGSGDENGTLAGLGPSPGARAVVVPVLYLLVCAVGLGGNTLVIYVVLRHAKMKTVTNIYILNLAVADVLLMLGLPFVATQNAISYWPFGPVLCRLVMTLDGINQFTSIFCLTVMSVDRYLAVVHPIRSARWRRPRVAKLASAAVWAFSLVMSLPLVVFADIQEGWNTCNLSWPEPVGLWGAVFIIYTSVLGFFGPLLVICLCYLLIVVKLKASGVRVGSTRRRSERKVTRMVVVVVLVFAGCWLPFFIVNIVNLAFALPEEPASAGAYFFVVVLSYANSCANPLLYGFLSDNFRQSFRKVLCLRKGYGAGAEDADATEPQPGPSSRLQEAMMPVRSCKANGLMQTSKL.

Over 1–45 (MEPLFPASPLTTWNTSSVVPSGSGDENGTLAGLGPSPGARAVVVP) the chain is Extracellular. N-linked (GlcNAc...) asparagine glycans are attached at residues N14 and N27. The helical transmembrane segment at 46-66 (VLYLLVCAVGLGGNTLVIYVV) threads the bilayer. The Cytoplasmic segment spans residues 67 to 77 (LRHAKMKTVTN). Residues 78–98 (IYILNLAVADVLLMLGLPFVA) traverse the membrane as a helical segment. Residues 99 to 115 (TQNAISYWPFGPVLCRL) lie on the Extracellular side of the membrane. An intrachain disulfide couples C113 to C188. A helical transmembrane segment spans residues 116–136 (VMTLDGINQFTSIFCLTVMSV). At 137–158 (DRYLAVVHPIRSARWRRPRVAK) the chain is on the cytoplasmic side. A helical transmembrane segment spans residues 159-179 (LASAAVWAFSLVMSLPLVVFA). The Extracellular segment spans residues 180–207 (DIQEGWNTCNLSWPEPVGLWGAVFIIYT). The N-linked (GlcNAc...) asparagine glycan is linked to N189. Residues 208–228 (SVLGFFGPLLVICLCYLLIVV) traverse the membrane as a helical segment. Residues 229 to 251 (KLKASGVRVGSTRRRSERKVTRM) are Cytoplasmic-facing. Residues 252–272 (VVVVVLVFAGCWLPFFIVNIV) form a helical membrane-spanning segment. The Extracellular portion of the chain corresponds to 273–286 (NLAFALPEEPASAG). The chain crosses the membrane as a helical span at residues 287–309 (AYFFVVVLSYANSCANPLLYGFL). Topologically, residues 310-368 (SDNFRQSFRKVLCLRKGYGAGAEDADATEPQPGPSSRLQEAMMPVRSCKANGLMQTSKL) are cytoplasmic. Residue C322 is the site of S-palmitoyl cysteine; by ZDHHC5 attachment.

This sequence belongs to the G-protein coupled receptor 1 family. As to quaternary structure, heterodimer with SSTR2. Heterodimerization with SSTR2 increases cell growth inhibition activity of SSTR2. Post-translationally, palmitoylated by ZDHHC5, but not ZDHHC3, nor ZDHHC8. Palmitoylation creates an additional intracellular loop which is thought to be important for efficient coupling to G-proteins and may target the protein to lipid rafts.

It localises to the cell membrane. Receptor for somatostatin 28 and to a lesser extent for somatostatin-14. The activity of this receptor is mediated by G proteins which inhibit adenylyl cyclase. Increases cell growth inhibition activity of SSTR2 following heterodimerization. This Bos taurus (Bovine) protein is Somatostatin receptor type 5 (SSTR5).